A 554-amino-acid chain; its full sequence is (E)-nerolidol synthase TPS18VF (554 aa).

The (2E,6E)-farnesyl diphosphate site is built by Arg-276, Asp-313, Asp-317, Arg-455, and Asp-458. Mg(2+)-binding residues include Asp-313 and Asp-317. The short motif at 313 to 317 is the DDXXD motif element; it reads DDIFD. Residues Asp-458, Ser-462, and Glu-466 each contribute to the Mg(2+) site.

It belongs to the terpene synthase family. Tpsb subfamily. Mg(2+) is required as a cofactor. It depends on Mn(2+) as a cofactor. Highly expressed in glandular trichomes.

It catalyses the reaction (2E,6E)-farnesyl diphosphate + H2O = (6E)-nerolidol + diphosphate. The enzyme catalyses (2E)-geranyl diphosphate + H2O = (R)-linalool + diphosphate. It carries out the reaction (2E)-geranyl diphosphate + H2O = (S)-linalool + diphosphate. It participates in secondary metabolite biosynthesis; terpenoid biosynthesis. Its function is as follows. Involved in sesquiterpene olefins biosynthesis, constituants of cannabinoids and terpenoids-rich resins. Catalyzes primarily the conversion of (2E)-farnesyl diphosphate to (E)-nerolidol, and the conversion of (2E)-geranyl diphosphate to (+)linalool and (-)linalool. This Cannabis sativa (Hemp) protein is (E)-nerolidol synthase TPS18VF.